A 392-amino-acid chain; its full sequence is Chloramphenicol resistance protein (392 aa).

The next 12 helical transmembrane spans lie at 6-26 (YLLA…AGLV), 42-62 (TLTS…AALA), 71-91 (LLGF…TTSF), 100-120 (VAAL…AALV), 129-149 (LAVL…GGSL), 160-180 (FWAV…AIPA), 205-225 (LLLA…SFTF), 239-259 (LWIS…VTVA), 268-288 (AQVL…LAML), 294-314 (ALLT…STLI), 332-352 (ATAA…TTLG), and 358-378 (LGPL…AFPF).

This sequence belongs to the major facilitator superfamily.

It is found in the cell membrane. The polypeptide is Chloramphenicol resistance protein (cmlR) (Streptomyces lividans).